The chain runs to 501 residues: Ribose import ATP-binding protein RbsA (501 aa).

2 consecutive ABC transporter domains span residues 6–242 and 253–495; these read LQLS…VGRK and VHGQ…VGKK. Residue 38-45 coordinates ATP; it reads GENGAGKS.

This sequence belongs to the ABC transporter superfamily. Ribose importer (TC 3.A.1.2.1) family. The complex is composed of an ATP-binding protein (RbsA), two transmembrane proteins (RbsC) and a solute-binding protein (RbsB).

The protein resides in the cell inner membrane. The catalysed reaction is D-ribose(out) + ATP + H2O = D-ribose(in) + ADP + phosphate + H(+). Its function is as follows. Part of the ABC transporter complex RbsABC involved in ribose import. Responsible for energy coupling to the transport system. The chain is Ribose import ATP-binding protein RbsA from Vibrio vulnificus (strain CMCP6).